A 568-amino-acid chain; its full sequence is 2-succinyl-5-enolpyruvyl-6-hydroxy-3-cyclohexene-1-carboxylate synthase (568 aa).

Belongs to the TPP enzyme family. MenD subfamily. In terms of assembly, homodimer. It depends on Mg(2+) as a cofactor. Requires Mn(2+) as cofactor. The cofactor is thiamine diphosphate.

It carries out the reaction isochorismate + 2-oxoglutarate + H(+) = 5-enolpyruvoyl-6-hydroxy-2-succinyl-cyclohex-3-ene-1-carboxylate + CO2. It functions in the pathway quinol/quinone metabolism; 1,4-dihydroxy-2-naphthoate biosynthesis; 1,4-dihydroxy-2-naphthoate from chorismate: step 2/7. The protein operates within quinol/quinone metabolism; menaquinone biosynthesis. Catalyzes the thiamine diphosphate-dependent decarboxylation of 2-oxoglutarate and the subsequent addition of the resulting succinic semialdehyde-thiamine pyrophosphate anion to isochorismate to yield 2-succinyl-5-enolpyruvyl-6-hydroxy-3-cyclohexene-1-carboxylate (SEPHCHC). The chain is 2-succinyl-5-enolpyruvyl-6-hydroxy-3-cyclohexene-1-carboxylate synthase from Actinobacillus succinogenes (strain ATCC 55618 / DSM 22257 / CCUG 43843 / 130Z).